The sequence spans 1361 residues: DNA-directed RNA polymerase subunit beta' (1361 aa).

Residues C69, C71, C84, and C87 each coordinate Zn(2+). Positions 460, 462, and 464 each coordinate Mg(2+). Zn(2+) contacts are provided by C808, C882, C889, and C892.

This sequence belongs to the RNA polymerase beta' chain family. As to quaternary structure, the RNAP catalytic core consists of 2 alpha, 1 beta, 1 beta' and 1 omega subunit. When a sigma factor is associated with the core the holoenzyme is formed, which can initiate transcription. The cofactor is Mg(2+). It depends on Zn(2+) as a cofactor.

The enzyme catalyses RNA(n) + a ribonucleoside 5'-triphosphate = RNA(n+1) + diphosphate. Functionally, DNA-dependent RNA polymerase catalyzes the transcription of DNA into RNA using the four ribonucleoside triphosphates as substrates. This chain is DNA-directed RNA polymerase subunit beta', found in Rickettsia bellii (strain RML369-C).